We begin with the raw amino-acid sequence, 406 residues long: Type II secretion system protein F (406 aa).

Residues 1-171 lie on the Cytoplasmic side of the membrane; it reads MAAFEYKALD…KMRSKLQQAM (171 aa). 3 residues coordinate Ca(2+): Glu97, Glu151, and Asp155. Residues 172–192 form a helical membrane-spanning segment; sequence IYPVVLVVFAVGIVAFLLAAV. The Periplasmic segment spans residues 193–223; sequence VPKIVGQFVQMGQALPASTQFLLDASDFLQH. The chain crosses the membrane as a helical span at residues 224–244; the sequence is WGISLLVGLLMLIYLVRWLLT. The Cytoplasmic segment spans residues 245 to 368; it reads KPDIRLRWDR…QDNSFESTVN (124 aa). Residues 369-389 traverse the membrane as a helical segment; the sequence is IALGIFTPALIALMAGMVLFI. Residues 390–406 lie on the Periplasmic side of the membrane; the sequence is VMATLMPILEMNNLMSR.

The protein belongs to the GSP F family. As to quaternary structure, type II secretion system is composed of four main components: the outer membrane complex, the inner membrane complex, the cytoplasmic secretion ATPase and the periplasm-spanning pseudopilus. Homodimer. Interacts with EpsE/GspE and EpsL/GspL components.

It localises to the cell inner membrane. Component of the type II secretion system inner membrane complex required for the energy-dependent secretion of extracellular factors such as proteases and toxins from the periplasm. The sequence is that of Type II secretion system protein F (epsF) from Vibrio cholerae serotype O1 (strain ATCC 39315 / El Tor Inaba N16961).